A 419-amino-acid polypeptide reads, in one-letter code: Gamma-glutamyl phosphate reductase (419 aa).

Belongs to the gamma-glutamyl phosphate reductase family.

Its subcellular location is the cytoplasm. The catalysed reaction is L-glutamate 5-semialdehyde + phosphate + NADP(+) = L-glutamyl 5-phosphate + NADPH + H(+). The protein operates within amino-acid biosynthesis; L-proline biosynthesis; L-glutamate 5-semialdehyde from L-glutamate: step 2/2. In terms of biological role, catalyzes the NADPH-dependent reduction of L-glutamate 5-phosphate into L-glutamate 5-semialdehyde and phosphate. The product spontaneously undergoes cyclization to form 1-pyrroline-5-carboxylate. This is Gamma-glutamyl phosphate reductase from Marinomonas sp. (strain MWYL1).